A 529-amino-acid chain; its full sequence is Glutamyl-tRNA reductase (529 aa).

Residue threonine 47–arginine 50 participates in substrate binding. The Nucleophile role is filled by cysteine 48. The segment at serine 56–arginine 80 is disordered. The span at proline 62 to proline 73 shows a compositional bias: pro residues. Substrate is bound by residues serine 125, glutamate 130–glutamine 132, and glutamine 136. NADP(+) is bound at residue glycine 205–alanine 210. A disordered region spans residues arginine 454 to arginine 505. Low complexity predominate over residues arginine 464–glycine 475.

This sequence belongs to the glutamyl-tRNA reductase family. In terms of assembly, homodimer.

It carries out the reaction (S)-4-amino-5-oxopentanoate + tRNA(Glu) + NADP(+) = L-glutamyl-tRNA(Glu) + NADPH + H(+). The protein operates within porphyrin-containing compound metabolism; protoporphyrin-IX biosynthesis; 5-aminolevulinate from L-glutamyl-tRNA(Glu): step 1/2. Functionally, catalyzes the NADPH-dependent reduction of glutamyl-tRNA(Glu) to glutamate 1-semialdehyde (GSA). The polypeptide is Glutamyl-tRNA reductase (Sorangium cellulosum (strain So ce56) (Polyangium cellulosum (strain So ce56))).